Reading from the N-terminus, the 149-residue chain is Vesicle-associated protein 3-1 (149 aa).

Position 1 is an N-acetylmethionine (methionine 1). Serine 2 is subject to N-acetylserine; in Vesicle-associated protein 3-1, N-terminally processed. The MSP domain maps to 6–126 (LLEIEPMYLQ…EETKLRVTYV (121 aa)).

This sequence belongs to the VAMP-associated protein (VAP) (TC 9.B.17) family.

In terms of biological role, may play a role in vesicle trafficking. The polypeptide is Vesicle-associated protein 3-1 (PVA31) (Arabidopsis thaliana (Mouse-ear cress)).